The sequence spans 306 residues: Glutathione transport system permease protein GsiC (306 aa).

The Cytoplasmic portion of the chain corresponds to 1–8; sequence MLNYFIKR. Residues 9–29 form a helical membrane-spanning segment; sequence LLGLIPTLLIVMVLVFLFVHL. Residues 30–98 are Periplasmic-facing; the sequence is LPGDPARLAA…QEIALRFMPT (69 aa). Residues 95–292 form the ABC transmembrane type-1 domain; that stretch reads FMPTFWLTVC…LEFILINLLV (198 aa). The chain crosses the membrane as a helical span at residues 99 to 119; the sequence is FWLTVCSMAWAVIFGMAIGIV. Residues 120-130 are Cytoplasmic-facing; the sequence is SAVWRNGWPDR. The chain crosses the membrane as a helical span at residues 131 to 151; sequence IGMTLAVSGLSFPAFALGMLL. Residues 152–168 lie on the Periplasmic side of the membrane; it reads MQIFSVELGWLPTVGAD. The chain crosses the membrane as a helical span at residues 169–189; it reads TWLHYILPSLTLGAAVAAVMA. Residues 190-228 are Cytoplasmic-facing; that stretch reads RFTRASFVDVLQEDYMRTARAKGVRESLVVLKHGLRNAL. Residues 229 to 249 traverse the membrane as a helical segment; sequence IPVVTMMGLQFGFLLGGSIVV. Residues 250-278 are Periplasmic-facing; it reads EKVFNWPGLGRLLVDSVEMRDYPVIQAEV. Residues 279-299 traverse the membrane as a helical segment; the sequence is LLFSLEFILINLLVDMLYAAI. Residues 300-306 lie on the Cytoplasmic side of the membrane; the sequence is NPAIRYK.

It belongs to the binding-protein-dependent transport system permease family. The complex is composed of two ATP-binding proteins (GsiA), two transmembrane proteins (GsiC and GsiD) and a solute-binding protein (GsiB).

The protein localises to the cell inner membrane. Part of the ABC transporter complex GsiABCD involved in glutathione import. Probably responsible for the translocation of the substrate across the membrane. This Pectobacterium atrosepticum (strain SCRI 1043 / ATCC BAA-672) (Erwinia carotovora subsp. atroseptica) protein is Glutathione transport system permease protein GsiC.